The sequence spans 347 residues: 4-hydroxy-2-oxovalerate aldolase 4 (347 aa).

Residues 9 to 259 (ITIVDTTLRD…DTGVDLFPLI (251 aa)) enclose the Pyruvate carboxyltransferase domain. Substrate contacts are provided by residues 17–18 (RD), Ser171, and His198. A Mn(2+)-binding site is contributed by Asp18. His198 and His200 together coordinate Mn(2+). Tyr289 contacts substrate.

The protein belongs to the 4-hydroxy-2-oxovalerate aldolase family.

The catalysed reaction is (S)-4-hydroxy-2-oxopentanoate = acetaldehyde + pyruvate. The polypeptide is 4-hydroxy-2-oxovalerate aldolase 4 (Rhodococcus opacus (strain B4)).